The primary structure comprises 89 residues: Small ribosomal subunit protein bS18 (89 aa).

Belongs to the bacterial ribosomal protein bS18 family. In terms of assembly, part of the 30S ribosomal subunit. Forms a tight heterodimer with protein bS6.

Binds as a heterodimer with protein bS6 to the central domain of the 16S rRNA, where it helps stabilize the platform of the 30S subunit. The chain is Small ribosomal subunit protein bS18 from Phocaeicola vulgatus (strain ATCC 8482 / DSM 1447 / JCM 5826 / CCUG 4940 / NBRC 14291 / NCTC 11154) (Bacteroides vulgatus).